Here is a 94-residue protein sequence, read N- to C-terminus: Protein S100-A1 (94 aa).

Blocked amino end (Gly) is present on Gly-2. 2 EF-hand domains span residues 13-48 (INVF…FLDA) and 50-85 (KDAD…LTVA). Ca(2+) is bound by residues Lys-28, Glu-33, Asp-63, Asn-65, Asp-67, Glu-69, and Glu-74. Position 86 is an S-nitrosocysteine (Cys-86).

This sequence belongs to the S-100 family. Dimer of either two alpha chains, or two beta chains, or one alpha and one beta chain. Also forms heterodimers with S100P. Interacts with AGER. Interacts with CAPZA1. Interacts with FKBP4. Interacts with RYR1 and RYR2. Interacts with CACYBP in a calcium-dependent manner. Interacts with PPP5C (via TPR repeats); the interaction is calcium-dependent and modulates PPP5C activity. Interacts with ATP2A2 and PLN in a Ca(2+)-dependent manner. Interacts with mitochondrial F1-ATPase subunits ATP5F1A and ATP5F1B; these interactions increase F1-ATPase activity. In terms of processing, glutathionylated; glutathionylation increases affinity to calcium about 10-fold. In terms of tissue distribution, although predominant among the water-soluble brain proteins, S100 is also found in a variety of other tissues.

It localises to the cytoplasm. The protein resides in the sarcoplasmic reticulum. Its subcellular location is the mitochondrion. In terms of biological role, small calcium binding protein that plays important roles in several biological processes such as Ca(2+) homeostasis, chondrocyte biology and cardiomyocyte regulation. In response to an increase in intracellular Ca(2+) levels, binds calcium which triggers conformational changes. These changes allow interactions with specific target proteins and modulate their activity. Regulates a network in cardiomyocytes controlling sarcoplasmic reticulum Ca(2+) cycling and mitochondrial function through interaction with the ryanodine receptors RYR1 and RYR2, sarcoplasmic reticulum Ca(2+)-ATPase/ATP2A2 and mitochondrial F1-ATPase. Facilitates diastolic Ca(2+) dissociation and myofilament mechanics in order to improve relaxation during diastole. This is Protein S100-A1 (S100A1) from Bos taurus (Bovine).